The chain runs to 308 residues: Ribonuclease Z (308 aa).

Zn(2+) is bound by residues H63, H65, D67, H68, H140, D211, and H269. D67 acts as the Proton acceptor in catalysis.

This sequence belongs to the RNase Z family. In terms of assembly, homodimer. The cofactor is Zn(2+).

It catalyses the reaction Endonucleolytic cleavage of RNA, removing extra 3' nucleotides from tRNA precursor, generating 3' termini of tRNAs. A 3'-hydroxy group is left at the tRNA terminus and a 5'-phosphoryl group is left at the trailer molecule.. Its function is as follows. Zinc phosphodiesterase, which displays some tRNA 3'-processing endonuclease activity. Probably involved in tRNA maturation, by removing a 3'-trailer from precursor tRNA. This Bacillus velezensis (strain DSM 23117 / BGSC 10A6 / LMG 26770 / FZB42) (Bacillus amyloliquefaciens subsp. plantarum) protein is Ribonuclease Z.